Reading from the N-terminus, the 227-residue chain is Cytochrome c oxidase subunit 2 (227 aa).

The Mitochondrial intermembrane portion of the chain corresponds to 1–14 (MAYPMQLGLQDATS). Residues 15–45 (PIMEELTDFHDHTLMIVFLISTLVLYIISLM) traverse the membrane as a helical segment. Residues 46–59 (LTTKLTHTNTMDAQ) are Mitochondrial matrix-facing. A helical membrane pass occupies residues 60-87 (EVETVWTILPAIILIMIALPSLRILYMM). Residues 88 to 227 (DEINDPYLTV…QFESWTSSMT (140 aa)) lie on the Mitochondrial intermembrane side of the membrane. Cu cation-binding residues include histidine 161, cysteine 196, glutamate 198, cysteine 200, histidine 204, and methionine 207. A Mg(2+)-binding site is contributed by glutamate 198.

It belongs to the cytochrome c oxidase subunit 2 family. As to quaternary structure, component of the cytochrome c oxidase (complex IV, CIV), a multisubunit enzyme composed of 14 subunits. The complex is composed of a catalytic core of 3 subunits MT-CO1, MT-CO2 and MT-CO3, encoded in the mitochondrial DNA, and 11 supernumerary subunits COX4I, COX5A, COX5B, COX6A, COX6B, COX6C, COX7A, COX7B, COX7C, COX8 and NDUFA4, which are encoded in the nuclear genome. The complex exists as a monomer or a dimer and forms supercomplexes (SCs) in the inner mitochondrial membrane with NADH-ubiquinone oxidoreductase (complex I, CI) and ubiquinol-cytochrome c oxidoreductase (cytochrome b-c1 complex, complex III, CIII), resulting in different assemblies (supercomplex SCI(1)III(2)IV(1) and megacomplex MCI(2)III(2)IV(2)). Found in a complex with TMEM177, COA6, COX18, COX20, SCO1 and SCO2. Interacts with TMEM177 in a COX20-dependent manner. Interacts with COX20. Interacts with COX16. The cofactor is Cu cation.

The protein localises to the mitochondrion inner membrane. It catalyses the reaction 4 Fe(II)-[cytochrome c] + O2 + 8 H(+)(in) = 4 Fe(III)-[cytochrome c] + 2 H2O + 4 H(+)(out). Its function is as follows. Component of the cytochrome c oxidase, the last enzyme in the mitochondrial electron transport chain which drives oxidative phosphorylation. The respiratory chain contains 3 multisubunit complexes succinate dehydrogenase (complex II, CII), ubiquinol-cytochrome c oxidoreductase (cytochrome b-c1 complex, complex III, CIII) and cytochrome c oxidase (complex IV, CIV), that cooperate to transfer electrons derived from NADH and succinate to molecular oxygen, creating an electrochemical gradient over the inner membrane that drives transmembrane transport and the ATP synthase. Cytochrome c oxidase is the component of the respiratory chain that catalyzes the reduction of oxygen to water. Electrons originating from reduced cytochrome c in the intermembrane space (IMS) are transferred via the dinuclear copper A center (CU(A)) of subunit 2 and heme A of subunit 1 to the active site in subunit 1, a binuclear center (BNC) formed by heme A3 and copper B (CU(B)). The BNC reduces molecular oxygen to 2 water molecules using 4 electrons from cytochrome c in the IMS and 4 protons from the mitochondrial matrix. This chain is Cytochrome c oxidase subunit 2 (MT-CO2), found in Cratogeomys castanops (Yellow-faced pocket gopher).